A 159-amino-acid chain; its full sequence is Ribosomal RNA large subunit methyltransferase H (159 aa).

Residues L76, G108, and 127-132 (FGLLTL) each bind S-adenosyl-L-methionine.

Belongs to the RNA methyltransferase RlmH family. As to quaternary structure, homodimer.

It is found in the cytoplasm. It catalyses the reaction pseudouridine(1915) in 23S rRNA + S-adenosyl-L-methionine = N(3)-methylpseudouridine(1915) in 23S rRNA + S-adenosyl-L-homocysteine + H(+). Its function is as follows. Specifically methylates the pseudouridine at position 1915 (m3Psi1915) in 23S rRNA. The chain is Ribosomal RNA large subunit methyltransferase H from Streptococcus equi subsp. zooepidemicus (strain H70).